The following is a 100-amino-acid chain: Urease subunit gamma (100 aa).

This sequence belongs to the urease gamma subunit family. As to quaternary structure, heterotrimer of UreA (gamma), UreB (beta) and UreC (alpha) subunits. Three heterotrimers associate to form the active enzyme.

It is found in the cytoplasm. The catalysed reaction is urea + 2 H2O + H(+) = hydrogencarbonate + 2 NH4(+). Its pathway is nitrogen metabolism; urea degradation; CO(2) and NH(3) from urea (urease route): step 1/1. The chain is Urease subunit gamma from Bordetella pertussis (strain Tohama I / ATCC BAA-589 / NCTC 13251).